The following is a 151-amino-acid chain: Nucleoside diphosphate kinase (151 aa).

Residues Lys9, Phe57, Arg85, Thr91, Arg102, and Asn112 each coordinate ATP. The active-site Pros-phosphohistidine intermediate is the His115.

This sequence belongs to the NDK family. It depends on Mg(2+) as a cofactor.

It is found in the cytoplasm. It carries out the reaction a 2'-deoxyribonucleoside 5'-diphosphate + ATP = a 2'-deoxyribonucleoside 5'-triphosphate + ADP. The catalysed reaction is a ribonucleoside 5'-diphosphate + ATP = a ribonucleoside 5'-triphosphate + ADP. In terms of biological role, major role in the synthesis of nucleoside triphosphates other than ATP. The ATP gamma phosphate is transferred to the NDP beta phosphate via a ping-pong mechanism, using a phosphorylated active-site intermediate. This Archaeoglobus fulgidus (strain ATCC 49558 / DSM 4304 / JCM 9628 / NBRC 100126 / VC-16) protein is Nucleoside diphosphate kinase.